Consider the following 302-residue polypeptide: Sulfate adenylyltransferase subunit 2 (302 aa).

The protein belongs to the PAPS reductase family. CysD subfamily. In terms of assembly, heterodimer composed of CysD, the smaller subunit, and CysN.

The enzyme catalyses sulfate + ATP + H(+) = adenosine 5'-phosphosulfate + diphosphate. It functions in the pathway sulfur metabolism; hydrogen sulfide biosynthesis; sulfite from sulfate: step 1/3. In terms of biological role, with CysN forms the ATP sulfurylase (ATPS) that catalyzes the adenylation of sulfate producing adenosine 5'-phosphosulfate (APS) and diphosphate, the first enzymatic step in sulfur assimilation pathway. APS synthesis involves the formation of a high-energy phosphoric-sulfuric acid anhydride bond driven by GTP hydrolysis by CysN coupled to ATP hydrolysis by CysD. The chain is Sulfate adenylyltransferase subunit 2 from Escherichia coli O9:H4 (strain HS).